A 478-amino-acid polypeptide reads, in one-letter code: Protein nucleotidyltransferase YdiU (478 aa).

Residues Gly-84, Gly-86, Arg-87, Lys-107, Asp-119, Gly-120, Arg-170, and Arg-177 each coordinate ATP. The active-site Proton acceptor is Asp-246. Asn-247 and Asp-256 together coordinate Mg(2+). Residue Asp-256 participates in ATP binding.

Belongs to the SELO family. The cofactor is Mg(2+). Requires Mn(2+) as cofactor.

It carries out the reaction L-seryl-[protein] + ATP = 3-O-(5'-adenylyl)-L-seryl-[protein] + diphosphate. The enzyme catalyses L-threonyl-[protein] + ATP = 3-O-(5'-adenylyl)-L-threonyl-[protein] + diphosphate. It catalyses the reaction L-tyrosyl-[protein] + ATP = O-(5'-adenylyl)-L-tyrosyl-[protein] + diphosphate. The catalysed reaction is L-histidyl-[protein] + UTP = N(tele)-(5'-uridylyl)-L-histidyl-[protein] + diphosphate. It carries out the reaction L-seryl-[protein] + UTP = O-(5'-uridylyl)-L-seryl-[protein] + diphosphate. The enzyme catalyses L-tyrosyl-[protein] + UTP = O-(5'-uridylyl)-L-tyrosyl-[protein] + diphosphate. Functionally, nucleotidyltransferase involved in the post-translational modification of proteins. It can catalyze the addition of adenosine monophosphate (AMP) or uridine monophosphate (UMP) to a protein, resulting in modifications known as AMPylation and UMPylation. The polypeptide is Protein nucleotidyltransferase YdiU (Escherichia coli O81 (strain ED1a)).